The following is a 67-amino-acid chain: Large ribosomal subunit protein uL29 (67 aa).

The protein belongs to the universal ribosomal protein uL29 family.

The sequence is that of Large ribosomal subunit protein uL29 from Staphylothermus marinus (strain ATCC 43588 / DSM 3639 / JCM 9404 / F1).